The chain runs to 571 residues: Glutamate--tRNA ligase (571 aa).

The 'HIGH' region motif lies at proline 106 to asparagine 116.

The protein belongs to the class-I aminoacyl-tRNA synthetase family. Glutamate--tRNA ligase type 2 subfamily.

The protein localises to the cytoplasm. It catalyses the reaction tRNA(Glu) + L-glutamate + ATP = L-glutamyl-tRNA(Glu) + AMP + diphosphate. Its function is as follows. Catalyzes the attachment of glutamate to tRNA(Glu) in a two-step reaction: glutamate is first activated by ATP to form Glu-AMP and then transferred to the acceptor end of tRNA(Glu). The sequence is that of Glutamate--tRNA ligase from Pyrococcus abyssi (strain GE5 / Orsay).